Reading from the N-terminus, the 280-residue chain is uncharacterized protein (280 aa).

An N-terminal signal peptide occupies residues 1–26 (MNILIKSAVKNFIVFSTALYTSFSFA).

The protein to E.coli YibQ.

This is an uncharacterized protein from Haemophilus influenzae (strain ATCC 51907 / DSM 11121 / KW20 / Rd).